Reading from the N-terminus, the 494-residue chain is Aldehyde dehydrogenase family 7 member A1 (494 aa).

247–252 (GSSKVG) serves as a coordination point for NAD(+). E269 functions as the Proton acceptor in the catalytic mechanism. C303 functions as the Nucleophile in the catalytic mechanism.

The protein belongs to the aldehyde dehydrogenase family. In terms of assembly, homotetramer.

It carries out the reaction an aldehyde + NAD(+) + H2O = a carboxylate + NADH + 2 H(+). In Brassica napus (Rape), this protein is Aldehyde dehydrogenase family 7 member A1 (BTG-26).